The following is a 411-amino-acid chain: LL-diaminopimelate aminotransferase (411 aa).

Substrate contacts are provided by Tyr-16 and Gly-43. Pyridoxal 5'-phosphate-binding positions include Tyr-73, 109 to 110, Tyr-133, Asn-188, Tyr-219, and 247 to 249; these read AK and SYS. Substrate-binding residues include Lys-110, Tyr-133, and Asn-188. Residue Lys-250 is modified to N6-(pyridoxal phosphate)lysine. Pyridoxal 5'-phosphate contacts are provided by Arg-258 and Asn-293. Substrate is bound by residues Asn-293 and Arg-389.

Belongs to the class-I pyridoxal-phosphate-dependent aminotransferase family. LL-diaminopimelate aminotransferase subfamily. In terms of assembly, homodimer. The cofactor is pyridoxal 5'-phosphate.

It carries out the reaction (2S,6S)-2,6-diaminopimelate + 2-oxoglutarate = (S)-2,3,4,5-tetrahydrodipicolinate + L-glutamate + H2O + H(+). It functions in the pathway amino-acid biosynthesis; L-lysine biosynthesis via DAP pathway; LL-2,6-diaminopimelate from (S)-tetrahydrodipicolinate (aminotransferase route): step 1/1. In terms of biological role, involved in the synthesis of meso-diaminopimelate (m-DAP or DL-DAP), required for both lysine and peptidoglycan biosynthesis. Catalyzes the direct conversion of tetrahydrodipicolinate to LL-diaminopimelate. The polypeptide is LL-diaminopimelate aminotransferase (Methanosphaera stadtmanae (strain ATCC 43021 / DSM 3091 / JCM 11832 / MCB-3)).